We begin with the raw amino-acid sequence, 301 residues long: tRNA pseudouridine synthase B (301 aa).

Catalysis depends on Asp-38, which acts as the Nucleophile.

It belongs to the pseudouridine synthase TruB family. Type 1 subfamily.

The catalysed reaction is uridine(55) in tRNA = pseudouridine(55) in tRNA. In terms of biological role, responsible for synthesis of pseudouridine from uracil-55 in the psi GC loop of transfer RNAs. The polypeptide is tRNA pseudouridine synthase B (Limosilactobacillus reuteri (strain DSM 20016) (Lactobacillus reuteri)).